The sequence spans 533 residues: Glucomannan 4-beta-mannosyltransferase 9 (533 aa).

The helical transmembrane segment at 37-57 (IVPALRLGVYICLTMSVMLFV) threads the bilayer. Asp136 is a catalytic residue. Asp195 and Asp197 together coordinate substrate. The active site involves Asp289. Transmembrane regions (helical) follow at residues 368 to 388 (LVAHIVTFIFYCVILPATVLV), 404 to 426 (VITLLNAVGTPRSLHLMVFWILF), 483 to 503 (VLELGVGMYLLFVGCYDAFFG), and 510 to 530 (YLFAQAIAFFIAGFGQIGTIV).

It belongs to the glycosyltransferase 2 family. Plant cellulose synthase-like A subfamily. In terms of tissue distribution, expressed in cotyledons at the base of the hypocotyls, in root elongation zone, lateral root primordia, vascular system of young leaves, abscission zone of the pedicle,.

It localises to the golgi apparatus membrane. It carries out the reaction GDP-mannose + (glucomannan)n = GDP + (glucomannan)n+1.. Its function is as follows. Possesses glucomannan synthase and mannan synthase activities in vitro. Mannan synthase consists of a 4-beta-mannosyltransferase activity on mannan using GDP-mannose. The beta-1,4-mannan product is the backbone for galactomannan synthesis by galactomannan galactosyltransferase. Galactomannan is a noncellulosic polysaccharides of plant cell wall. Required for lateral root development. This is Glucomannan 4-beta-mannosyltransferase 9 from Arabidopsis thaliana (Mouse-ear cress).